The chain runs to 833 residues: Lon protease (833 aa).

Residues 3–198 enclose the Lon N-terminal domain; the sequence is YPFMATRGVI…LIFSFLVELK (196 aa). ATP is bound at residue 390 to 397; sequence GPPGTGKT. The Lon proteolytic domain maps to 627–808; sequence YERIGAVNGL…DEIFENLFGK (182 aa). Catalysis depends on residues serine 714 and lysine 757.

It belongs to the peptidase S16 family. In terms of assembly, homohexamer. Organized in a ring with a central cavity.

It localises to the cytoplasm. It catalyses the reaction Hydrolysis of proteins in presence of ATP.. ATP-dependent serine protease that mediates the selective degradation of mutant and abnormal proteins as well as certain short-lived regulatory proteins. Required for cellular homeostasis and for survival from DNA damage and developmental changes induced by stress. Degrades polypeptides processively to yield small peptide fragments that are 5 to 10 amino acids long. Binds to DNA in a double-stranded, site-specific manner. In Mycoplasma mobile (strain ATCC 43663 / 163K / NCTC 11711) (Mesomycoplasma mobile), this protein is Lon protease.